The primary structure comprises 433 residues: N-lysine methyltransferase SMYD2 (433 aa).

In terms of domain architecture, SET spans glycine 7–isoleucine 241. S-adenosyl-L-methionine is bound at residue lysine 17–arginine 19. Zn(2+) is bound by residues cysteine 52, cysteine 55, cysteine 65, cysteine 68, cysteine 74, cysteine 78, histidine 86, and cysteine 90. The segment at cysteine 52–cysteine 90 adopts an MYND-type zinc-finger fold. S-adenosyl-L-methionine contacts are provided by residues histidine 137, asparagine 206–histidine 207, and tyrosine 258–phenylalanine 260. Serine 283 bears the Phosphoserine mark.

Belongs to the class V-like SAM-binding methyltransferase superfamily. In terms of assembly, interacts with RNA polymerase II and HELZ. Interacts with SIN3A and HDAC1. Interacts (via MYND-type zinc finger) with EPB41L3. Interacts (via SET domain) with p53/TP53. Interacts with RB1 and HSP90AA1.

It localises to the cytoplasm. The protein resides in the cytosol. It is found in the nucleus. It carries out the reaction L-lysyl(4)-[histone H3] + 3 S-adenosyl-L-methionine = N(6),N(6),N(6)-trimethyl-L-lysyl(4)-[histone H3] + 3 S-adenosyl-L-homocysteine + 3 H(+). The enzyme catalyses L-lysyl-[protein] + S-adenosyl-L-methionine = N(6)-methyl-L-lysyl-[protein] + S-adenosyl-L-homocysteine + H(+). Functionally, protein-lysine N-methyltransferase that methylates both histones and non-histone proteins, including p53/TP53 and RB1. Specifically trimethylates histone H3 'Lys-4' (H3K4me3) in vivo. The activity requires interaction with HSP90alpha. Shows even higher methyltransferase activity on p53/TP53. Monomethylates 'Lys-370' of p53/TP53, leading to decreased DNA-binding activity and subsequent transcriptional regulation activity of p53/TP53. Monomethylates RB1 at 'Lys-860'. This is N-lysine methyltransferase SMYD2 (Smyd2) from Rattus norvegicus (Rat).